The sequence spans 204 residues: GTP cyclohydrolase-2 (204 aa).

Residue 49–53 (RIHSE) coordinates GTP. Zn(2+) is bound by residues C54, C65, and C67. GTP-binding positions include Q70, 92–94 (EGR), and T114. D126 (proton acceptor) is an active-site residue. Residue R128 is the Nucleophile of the active site. T149 and K154 together coordinate GTP.

Belongs to the GTP cyclohydrolase II family. Requires Zn(2+) as cofactor.

The catalysed reaction is GTP + 4 H2O = 2,5-diamino-6-hydroxy-4-(5-phosphoribosylamino)-pyrimidine + formate + 2 phosphate + 3 H(+). It participates in cofactor biosynthesis; riboflavin biosynthesis; 5-amino-6-(D-ribitylamino)uracil from GTP: step 1/4. Its function is as follows. Catalyzes the conversion of GTP to 2,5-diamino-6-ribosylamino-4(3H)-pyrimidinone 5'-phosphate (DARP), formate and pyrophosphate. The polypeptide is GTP cyclohydrolase-2 (Shewanella baltica (strain OS223)).